Here is a 138-residue protein sequence, read N- to C-terminus: MAKAIPKISSRRNGRIGSRKGARRIPKGVIHVQASFNNTIVTVTDVRGRVVSWSSAGTSGFKGTRRGTPFAAQTAAANAIRTVVDQGMQRAEVMIKGPGLGRDAALRAIRRSGILLTFVRDVTPMPHNGCRPPKKRRV.

A disordered region spans residues 1–22 (MAKAIPKISSRRNGRIGSRKGA). The span at 9-22 (SSRRNGRIGSRKGA) shows a compositional bias: basic residues.

The protein belongs to the universal ribosomal protein uS11 family. Part of the 30S ribosomal subunit.

Its subcellular location is the plastid. The protein localises to the chloroplast. This Nicotiana tabacum (Common tobacco) protein is Small ribosomal subunit protein uS11c.